Reading from the N-terminus, the 188-residue chain is V-type proton ATPase subunit E (188 aa).

It belongs to the V-ATPase E subunit family.

Its function is as follows. Produces ATP from ADP in the presence of a proton gradient across the membrane. The sequence is that of V-type proton ATPase subunit E from Dictyoglomus turgidum (strain DSM 6724 / Z-1310).